Reading from the N-terminus, the 358-residue chain is MSISHIFGPQQPQYSSVTASAHGKVNLHLGVGPAREDGYHELDTIFQAVSLKEEVTVALRDARGAQDAEAVQVAEAAQEAADAAPCTWSVSGFDSHLVPQDSSNLAWKAVAAIQKLARQAHVPWADAPVHIHIDKGIPVAGGMAGGSADAAAALVAATELYFPDSRASRRPDGAQLSDIAAELGADVPFCLLGGTARGTGKGENLMPVIATGTYHWAIATDKRGLSTPEVFKQLDQQRAAASAASPKAARAGSPEGLIAALRTGNPEEVGKLLVNDLQAPAISLLPSLRETLKAAEEAGAIAAIVSGSGPTVAMLCASADDAVEVATAVSVAGKASSTMTTSSPAAAAGVIKREEVLE.

Residue Lys-24 is part of the active site. 138-148 (PVAGGMAGGSA) contacts ATP. Residue Asp-186 is part of the active site.

This sequence belongs to the GHMP kinase family. IspE subfamily.

The enzyme catalyses 4-CDP-2-C-methyl-D-erythritol + ATP = 4-CDP-2-C-methyl-D-erythritol 2-phosphate + ADP + H(+). It functions in the pathway isoprenoid biosynthesis; isopentenyl diphosphate biosynthesis via DXP pathway; isopentenyl diphosphate from 1-deoxy-D-xylulose 5-phosphate: step 3/6. Its function is as follows. Catalyzes the phosphorylation of the position 2 hydroxy group of 4-diphosphocytidyl-2C-methyl-D-erythritol. The chain is 4-diphosphocytidyl-2-C-methyl-D-erythritol kinase from Corynebacterium jeikeium (strain K411).